Reading from the N-terminus, the 258-residue chain is Transmembrane O-methyltransferase homolog (258 aa).

S-adenosyl-L-methionine contacts are provided by residues glutamate 104, 106 to 107 (GT), serine 112, glutamate 130, and serine 160.

It belongs to the class I-like SAM-binding methyltransferase superfamily. Cation-dependent O-methyltransferase family. As to quaternary structure, interacts with LHFPL5, PCDH15, TMC1, TMC2 and TMIE. The interaction of TOMT with TMC1 and TMC2 is required for the transportation of TMC1/2 into the stereocilia of hair cells. Interacts directly with TMC1. As to expression, widely expressed with high levels in outer and inner hair cells of the cochlea and vestibule.

Its subcellular location is the cytoplasm. The protein resides in the endoplasmic reticulum. The catalysed reaction is a catechol + S-adenosyl-L-methionine = a guaiacol + S-adenosyl-L-homocysteine + H(+). Functionally, catalyzes the O-methylation, and thereby the inactivation, of catecholamine neurotransmitters and catechol hormones. Required for auditory function. Component of the cochlear hair cell's mechanotransduction (MET) machinery. Involved in the assembly of the asymmetric tip-link MET complex. Required for transportation of TMC1 and TMC2 proteins into the mechanically sensitive stereocilia of the hair cells. The function in MET is independent of the enzymatic activity. The chain is Transmembrane O-methyltransferase homolog from Mus musculus (Mouse).